A 575-amino-acid chain; its full sequence is Alpha-humulene synthase (575 aa).

Residues D325, D329, D469, and E477 each coordinate Mg(2+). Residues 325 to 329 carry the DDXXD motif motif; sequence DDLYD.

It belongs to the terpene synthase family. Tpsa subfamily. Mg(2+) is required as a cofactor. Mn(2+) serves as cofactor.

It catalyses the reaction (2E,6E)-farnesyl diphosphate = alpha-humulene + diphosphate. It participates in sesquiterpene biosynthesis. Its pathway is terpene metabolism; oleoresin biosynthesis. Functionally, terpene synthase (TPS) involved in the biosynthesis of sesquiterpene natural products included in conifer oleoresin secretions and volatile emissions; these compounds contribute to biotic and abiotic stress defense against herbivores and pathogens. Catalyzes the conversion of (2E,6E)-farnesyl diphosphate (FPP) to (1E,4E,8E)-alpha-humulene. This Picea glauca (White spruce) protein is Alpha-humulene synthase.